The primary structure comprises 118 residues: Large ribosomal subunit protein uL18 (118 aa).

Belongs to the universal ribosomal protein uL18 family. In terms of assembly, part of the 50S ribosomal subunit; part of the 5S rRNA/L5/L18/L25 subcomplex. Contacts the 5S and 23S rRNAs.

Its function is as follows. This is one of the proteins that bind and probably mediate the attachment of the 5S RNA into the large ribosomal subunit, where it forms part of the central protuberance. The protein is Large ribosomal subunit protein uL18 of Dichelobacter nodosus (strain VCS1703A).